The chain runs to 164 residues: Low molecular weight protein-tyrosine-phosphatase (164 aa).

Catalysis depends on cysteine 9, which acts as the Nucleophile. Arginine 15 is a catalytic residue. Residue aspartate 128 is the Proton donor of the active site.

This sequence belongs to the low molecular weight phosphotyrosine protein phosphatase family.

It carries out the reaction O-phospho-L-tyrosyl-[protein] + H2O = L-tyrosyl-[protein] + phosphate. In terms of biological role, acts on tyrosine phosphorylated proteins, low-MW aryl phosphates and natural and synthetic acyl phosphates. May be involved in the regulation of sulfur amino acid metabolism. The chain is Low molecular weight protein-tyrosine-phosphatase (ptpA) from Streptomyces coelicolor (strain ATCC BAA-471 / A3(2) / M145).